We begin with the raw amino-acid sequence, 117 residues long: MDMRVLAQLLGLLLLCFPGARCDIQMTQSPSSLSASVGDRVTITCRASQGISNYLAWFQQKPGKAPKSLIYAASSLQSGVPSKFSGSGSGTDFTLTISSLQPEDFATYYCQQYNSYP.

The first 22 residues, Met-1–Cys-22, serve as a signal peptide directing secretion. Positions Asp-23–Cys-45 are framework-1. An Ig-like domain is found at Ile-24 to Pro-117. A disulfide bridge links Cys-45 with Cys-110. A complementarity-determining-1 region spans residues Arg-46–Ala-56. Positions Trp-57–Tyr-71 are framework-2. The tract at residues Ala-72–Ser-78 is complementarity-determining-2. The interval Gly-79–Cys-110 is framework-3. Positions Gln-111 to Pro-117 are complementarity-determining-3.

Immunoglobulins are composed of two identical heavy chains and two identical light chains; disulfide-linked.

It is found in the secreted. The protein resides in the cell membrane. Its function is as follows. V region of the variable domain of immunoglobulin light chains that participates in the antigen recognition. Immunoglobulins, also known as antibodies, are membrane-bound or secreted glycoproteins produced by B lymphocytes. In the recognition phase of humoral immunity, the membrane-bound immunoglobulins serve as receptors which, upon binding of a specific antigen, trigger the clonal expansion and differentiation of B lymphocytes into immunoglobulins-secreting plasma cells. Secreted immunoglobulins mediate the effector phase of humoral immunity, which results in the elimination of bound antigens. The antigen binding site is formed by the variable domain of one heavy chain, together with that of its associated light chain. Thus, each immunoglobulin has two antigen binding sites with remarkable affinity for a particular antigen. The variable domains are assembled by a process called V-(D)-J rearrangement and can then be subjected to somatic hypermutations which, after exposure to antigen and selection, allow affinity maturation for a particular antigen. The sequence is that of Immunoglobulin kappa variable 1-16 from Homo sapiens (Human).